The following is a 500-amino-acid chain: NAD(P)H-quinone oxidoreductase subunit 2, chloroplastic (500 aa).

13 helical membrane passes run 15 to 35 (ILPE…DLSL), 42 to 62 (WIIY…CLQW), 79 to 99 (FSIA…LLSI), 109 to 129 (LMEF…LCGA), 132 to 152 (LITI…LAGY), 167 to 187 (LLVG…LYGL), 201 to 221 (LIFA…CIIV), 247 to 267 (VVAF…IRII), 278 to 298 (WQFL…LVAI), 306 to 326 (MLAY…ISST), 334 to 354 (LVYM…VILF), 377 to 397 (ASCL…AGFF), and 400 to 420 (IYLF…VGLL).

Belongs to the complex I subunit 2 family. As to quaternary structure, NDH is composed of at least 16 different subunits, 5 of which are encoded in the nucleus.

The protein resides in the plastid. The protein localises to the chloroplast thylakoid membrane. The catalysed reaction is a plastoquinone + NADH + (n+1) H(+)(in) = a plastoquinol + NAD(+) + n H(+)(out). The enzyme catalyses a plastoquinone + NADPH + (n+1) H(+)(in) = a plastoquinol + NADP(+) + n H(+)(out). Its function is as follows. NDH shuttles electrons from NAD(P)H:plastoquinone, via FMN and iron-sulfur (Fe-S) centers, to quinones in the photosynthetic chain and possibly in a chloroplast respiratory chain. The immediate electron acceptor for the enzyme in this species is believed to be plastoquinone. Couples the redox reaction to proton translocation, and thus conserves the redox energy in a proton gradient. The protein is NAD(P)H-quinone oxidoreductase subunit 2, chloroplastic of Chaetosphaeridium globosum (Charophycean green alga).